Here is a 461-residue protein sequence, read N- to C-terminus: Fumarate hydratase class II (461 aa).

Residues 98-100 (SGT), 129-132 (HPND), 139-141 (SSN), and threonine 187 each bind substrate. Catalysis depends on histidine 188, which acts as the Proton donor/acceptor. The active site involves serine 318. Substrate contacts are provided by residues serine 319 and 324 to 326 (KVN).

It belongs to the class-II fumarase/aspartase family. Fumarase subfamily. Homotetramer.

It localises to the cytoplasm. The enzyme catalyses (S)-malate = fumarate + H2O. Its pathway is carbohydrate metabolism; tricarboxylic acid cycle; (S)-malate from fumarate: step 1/1. Involved in the TCA cycle. Catalyzes the stereospecific interconversion of fumarate to L-malate. In Rickettsia prowazekii (strain Madrid E), this protein is Fumarate hydratase class II.